Consider the following 308-residue polypeptide: Lysophosphatidic acid receptor 6 (308 aa).

The Extracellular segment spans residues 1-16 (MVSSNCSTEDSFKYTL). N5 is a glycosylation site (N-linked (GlcNAc...) asparagine). Residues 17–43 (YGCVFSMVFVLGLIANCVAIYIFTFTL) form a helical membrane-spanning segment. The Cytoplasmic segment spans residues 44–52 (KVRNETTTY). Residues 53-76 (MLNLAISDLLFVFTLPFRIYYFVV) traverse the membrane as a helical segment. The Extracellular segment spans residues 77-89 (RNWPFGDVLCKIS). Residues C86 and C165 are joined by a disulfide bond. Residues 90-109 (VTLFYTNMYGSILFLTCISV) traverse the membrane as a helical segment. Topologically, residues 110 to 130 (DRFLAIVHPFRSKTLRTKRNA) are cytoplasmic. Residues 131–151 (RIVCVAVWITVLAGSTPASFF) traverse the membrane as a helical segment. Residues 152–178 (QSTNRQNNTEQRTCFENFPESTWKTYL) are Extracellular-facing. The chain crosses the membrane as a helical span at residues 179–206 (SRIVIFIEIVGFFIPLILNVTCSTMVLR). Over 207–224 (TLNKPLTLSRNKLSKKKV) the chain is Cytoplasmic. The chain crosses the membrane as a helical span at residues 225–250 (LKMIFVHLVIFCFCFVPYNITLILYS). Residues 251 to 269 (LMRTQTWINCSVVTAVRTM) lie on the Extracellular side of the membrane. A helical membrane pass occupies residues 270–289 (YPVTLCIAVSNCCFDPIVYY). C281 carries the S-palmitoyl cysteine lipid modification. Over 290–308 (FTSDTNSELDKKQQVHQNT) the chain is Cytoplasmic.

Belongs to the G-protein coupled receptor 1 family. In terms of tissue distribution, induced in activated T-cells.

It is found in the cell membrane. Functionally, binds to oleoyl-L-alpha-lysophosphatidic acid (LPA). Intracellular cAMP is involved in the receptor activation. This chain is Lysophosphatidic acid receptor 6 (LPAR6), found in Gallus gallus (Chicken).